A 139-amino-acid chain; its full sequence is ATP synthase epsilon chain (139 aa).

This sequence belongs to the ATPase epsilon chain family. In terms of assembly, F-type ATPases have 2 components, CF(1) - the catalytic core - and CF(0) - the membrane proton channel. CF(1) has five subunits: alpha(3), beta(3), gamma(1), delta(1), epsilon(1). CF(0) has three main subunits: a, b and c.

It localises to the cell inner membrane. In terms of biological role, produces ATP from ADP in the presence of a proton gradient across the membrane. This is ATP synthase epsilon chain from Acinetobacter baumannii (strain SDF).